The following is a 229-amino-acid chain: Heptaprenylglyceryl phosphate synthase (229 aa).

Lys12 is a sn-glycerol 1-phosphate binding site. Mg(2+) contacts are provided by Asp14 and Ser40. Residues 159–164 (YLEYSG), Gly189, and 209–210 (GN) contribute to the sn-glycerol 1-phosphate site.

Belongs to the GGGP/HepGP synthase family. Group I subfamily. Homodimer. The cofactor is Mg(2+).

It carries out the reaction sn-glycerol 1-phosphate + all-trans-heptaprenyl diphosphate = 3-heptaprenyl-sn-glycero-1-phosphate + diphosphate. It participates in membrane lipid metabolism; glycerophospholipid metabolism. Its function is as follows. Prenyltransferase that catalyzes in vivo the transfer of the heptaprenyl moiety of heptaprenyl pyrophosphate (HepPP; 35 carbon atoms) to the C3 hydroxyl of sn-glycerol-1-phosphate (G1P), producing heptaprenylglyceryl phosphate (HepGP). This reaction is an ether-bond-formation step in the biosynthesis of archaea-type G1P-based membrane lipids found in Bacillales. The sequence is that of Heptaprenylglyceryl phosphate synthase from Bacillus velezensis (strain DSM 23117 / BGSC 10A6 / LMG 26770 / FZB42) (Bacillus amyloliquefaciens subsp. plantarum).